Consider the following 464-residue polypeptide: Heterogeneous nuclear ribonucleoprotein K (464 aa).

At Met-1 the chain carries N-acetylmethionine. Residues 1–37 (METEQPEETFPNTETNGEFGKRPAEDMEEEQAFKRSR) form a disordered region. The tract at residues 1–276 (METEQPEETF…GRGGRPMPPS (276 aa)) is necessary for interaction with DDX1. The span at 19 to 37 (FGKRPAEDMEEEQAFKRSR) shows a compositional bias: basic and acidic residues. The residue at position 34 (Lys-34) is an N6-acetyllysine; alternate. A Glycyl lysine isopeptide (Lys-Gly) (interchain with G-Cter in SUMO1); alternate cross-link involves residue Lys-34. Residue Lys-34 forms a Glycyl lysine isopeptide (Lys-Gly) (interchain with G-Cter in SUMO2); alternate linkage. Position 36 is a phosphoserine (Ser-36). Position 39 is a phosphothreonine (Thr-39). The 63-residue stretch at 42 to 104 (MVELRILLQS…ETIGEILKKI (63 aa)) folds into the KH 1 domain. Residues Lys-52 and Lys-60 each participate in a glycyl lysine isopeptide (Lys-Gly) (interchain with G-Cter in SUMO2) cross-link. Tandem repeats lie at residues 54 to 76 (AGAVIGKGGKNIKALRTDYNASV) and 59 to 62 (GKGG). The tract at residues 54–421 (AGAVIGKGGK…QIRHESGASI (368 aa)) is 2 X 22 AA approximate repeats. Residues 59-407 (GKGGKNIKAL…LAGSIIGKGG (349 aa)) are 5 X 4 AA repeats of G-X-G-G. Ser-75 and Ser-116 each carry phosphoserine. The KH 2 domain maps to 144–209 (DCELRLLIHQ…DRVVECIKII (66 aa)). A Glycyl lysine isopeptide (Lys-Gly) (interchain with G-Cter in SUMO1); alternate cross-link involves residue Lys-163. Lys-163 is covalently cross-linked (Glycyl lysine isopeptide (Lys-Gly) (interchain with G-Cter in SUMO2); alternate). Position 198 is an N6-acetyllysine (Lys-198). Residues 209–337 (ILDLISESPI…RPGDRYDGMV (129 aa)) form an interaction with ZIK1 region. Phosphoserine is present on residues Ser-214 and Ser-216. Residue Lys-219 forms a Glycyl lysine isopeptide (Lys-Gly) (interchain with G-Cter in SUMO2); alternate linkage. The residue at position 219 (Lys-219) is an N6-succinyllysine; alternate. The RNA-binding RGG-box stretch occupies residues 236–273 (YGGFTMMFDDRRGRPVGFPMRGRGGFDRMPPGRGGRPM). A run of 3 repeats spans residues 245–250 (DRRGRP), 257–260 (GRGG), and 267–270 (GRGG). The segment at 245–329 (DRRGRPVGFP…LMAYDRRGRP (85 aa)) is 2 X 6 AA approximate repeats. The disordered stretch occupies residues 250–329 (PVGFPMRGRG…LMAYDRRGRP (80 aa)). Low complexity predominate over residues 252–266 (GFPMRGRGGFDRMPP). Over residues 276–285 (SRRDYDDMSP) the composition is skewed to basic and acidic residues. Ser-284 carries the phosphoserine modification. The 3-4 repeat unit spans residues 295 to 298 (GRGG). At Arg-316 the chain carries Omega-N-methylarginine. One copy of the 2-2 repeat lies at 324–329 (DRRGRP). Arg-377 carries the post-translational modification Omega-N-methylarginine. Ser-379 carries the post-translational modification Phosphoserine. Position 380 is a phosphotyrosine (Tyr-380). The KH 3 domain occupies 387-451 (IITTQVTIPK…DQIQNAQYLL (65 aa)). 2 repeat units span residues 399–421 (AGSIIGKGGQRIKQIRHESGASI) and 404–407 (GKGG). At Lys-405 the chain carries N6-acetyllysine; alternate. Lys-405 participates in a covalent cross-link: Glycyl lysine isopeptide (Lys-Gly) (interchain with G-Cter in SUMO2); alternate. Ser-420 carries the phosphoserine modification. Residue Lys-422 forms a Glycyl lysine isopeptide (Lys-Gly) (interchain with G-Cter in SUMO1); alternate linkage. A Glycyl lysine isopeptide (Lys-Gly) (interchain with G-Cter in SUMO2); alternate cross-link involves residue Lys-422. Lys-422 is covalently cross-linked (Glycyl lysine isopeptide (Lys-Gly) (interchain with G-Cter in SUMO); alternate).

Identified in the spliceosome C complex. Interacts with ANKRD28, RBM42 and ZIK1. Interacts with DDX1. Interacts with MDM2; this interaction leads to ubiquitination and proteasomal degradation. Interacts with p53/TP53. Interacts with BRDT. Interacts with IVNS1ABP. Interacts with PPIA/CYPA. Part of a transcription inhibitory ribonucleoprotein complex composed at least of the circular RNA circZNF827, ZNF827 and HNRNPL. Sumoylated by CBX4. Sumoylation is increased upon DNA damage, such as that produced by doxorubicin, etoposide, UV light and camptothecin, due to enhanced CBX4 phosphorylation by HIPK2 under these conditions. In terms of processing, ubiquitinated by MDM2. Doxorubicin treatment does not affect monoubiquitination, but slightly decreases HNRNPK poly-ubiquitination. Post-translationally, O-glycosylated (O-GlcNAcylated), in a cell cycle-dependent manner.

The protein localises to the cytoplasm. It localises to the nucleus. The protein resides in the nucleoplasm. Its subcellular location is the cell projection. It is found in the podosome. Its function is as follows. One of the major pre-mRNA-binding proteins. Binds tenaciously to poly(C) sequences. Likely to play a role in the nuclear metabolism of hnRNAs, particularly for pre-mRNAs that contain cytidine-rich sequences. Can also bind poly(C) single-stranded DNA. Plays an important role in p53/TP53 response to DNA damage, acting at the level of both transcription activation and repression. When sumoylated, acts as a transcriptional coactivator of p53/TP53, playing a role in p21/CDKN1A and 14-3-3 sigma/SFN induction. As far as transcription repression is concerned, acts by interacting with long intergenic RNA p21 (lincRNA-p21), a non-coding RNA induced by p53/TP53. This interaction is necessary for the induction of apoptosis, but not cell cycle arrest. As part of a ribonucleoprotein complex composed at least of ZNF827, HNRNPL and the circular RNA circZNF827 that nucleates the complex on chromatin, may negatively regulate the transcription of genes involved in neuronal differentiation. The chain is Heterogeneous nuclear ribonucleoprotein K (HNRNPK) from Bos taurus (Bovine).